The chain runs to 71 residues: MLKRILISIIRFYQRFISPIKVRPTCRFYPTCSQYAIEAVTKYGCVKGTFLALKRILKCHPFHPGGFDPIK.

Belongs to the UPF0161 family.

It is found in the cell membrane. In terms of biological role, could be involved in insertion of integral membrane proteins into the membrane. This Ruminiclostridium cellulolyticum (strain ATCC 35319 / DSM 5812 / JCM 6584 / H10) (Clostridium cellulolyticum) protein is Putative membrane protein insertion efficiency factor.